A 261-amino-acid polypeptide reads, in one-letter code: Syntaxin-7 (261 aa).

Ser-2 is subject to N-acetylserine. The Cytoplasmic portion of the chain corresponds to 2 to 238 (SYTPGIGGDS…DYQRKSRKTL (237 aa)). Residue Thr-4 is modified to Phosphothreonine. Ser-45 carries the post-translational modification Phosphoserine. Residues 47-68 (ELRQLLQQKQQYTNQLAKETDK) are a coiled coil. Position 75 is a phosphoserine (Ser-75). Thr-79 carries the phosphothreonine modification. A phosphoserine mark is found at Ser-125, Ser-126, Ser-129, and Ser-205. The interval 128 to 148 (VSGGFPEDSSKEKNLVSWESQ) is disordered. The 63-residue stretch at 165–227 (LRLIHERESS…QQANQQLSRA (63 aa)) folds into the t-SNARE coiled-coil homology domain. The helical; Anchor for type IV membrane protein transmembrane segment at 239–259 (CIIIFILVVRIVIICLIVWGL) threads the bilayer. The Vesicular segment spans residues 260 to 261 (KG).

It belongs to the syntaxin family. In terms of assembly, interacts with VPS11, VPS16 and VPS18. Interacts with VPS33A. Forms a SNARE complex with VTI1B, STX8 and VAMP8 which functions in the homotypic fusion of late endosomes. Component of the SNARE complex composed of STX7, STX8, VAMP7 and VTI1B that is required for heterotypic fusion of late endosomes with lysosomes. Interacts with TPC1.

It is found in the early endosome membrane. Functionally, may be involved in protein trafficking from the plasma membrane to the early endosome (EE) as well as in homotypic fusion of endocytic organelles. Mediates the endocytic trafficking from early endosomes to late endosomes and lysosomes. This is Syntaxin-7 (Stx7) from Mus musculus (Mouse).